A 403-amino-acid polypeptide reads, in one-letter code: RUN domain-containing protein 3B (403 aa).

The interval 1 to 20 (MASRSLGGLSGSRGGGKKSL) is disordered. Arg-13 is modified (omega-N-methylarginine). An RUN domain is found at 53–185 (DDSSPEFNNF…IDFSFCLKGE (133 aa)). The tract at residues 207 to 232 (SDSISSDEEELRTFGSSDSEGSTPEN) is disordered. Ser-211 and Ser-212 each carry phosphoserine. Positions 220–231 (FGSSDSEGSTPE) are enriched in polar residues. Residues 296–321 (AHKLEKEQLEYIIVELQDQLKSYQSL) are a coiled coil.

Belongs to the RUNDC3 family. In terms of assembly, interacts with RAP2A.

The protein is RUN domain-containing protein 3B (Rundc3b) of Rattus norvegicus (Rat).